The following is a 285-amino-acid chain: 1,4-dihydroxy-2-naphthoyl-CoA synthase (285 aa).

Residues Arg-45, 84–88 (AGGDQ), Tyr-97, 129–133 (YSIGG), Thr-155, Ser-161, Tyr-258, and Lys-273 contribute to the substrate site. 154–156 (QTG) lines the hydrogencarbonate pocket.

This sequence belongs to the enoyl-CoA hydratase/isomerase family. MenB subfamily. Homohexamer. The cofactor is hydrogencarbonate.

It catalyses the reaction 2-succinylbenzoyl-CoA + H(+) = 1,4-dihydroxy-2-naphthoyl-CoA + H2O. It participates in quinol/quinone metabolism; 1,4-dihydroxy-2-naphthoate biosynthesis; 1,4-dihydroxy-2-naphthoate from chorismate: step 6/7. Its pathway is quinol/quinone metabolism; menaquinone biosynthesis. Functionally, converts o-succinylbenzoyl-CoA (OSB-CoA) to 1,4-dihydroxy-2-naphthoyl-CoA (DHNA-CoA). This Salmonella typhimurium (strain LT2 / SGSC1412 / ATCC 700720) protein is 1,4-dihydroxy-2-naphthoyl-CoA synthase.